The following is a 142-amino-acid chain: Large ribosomal subunit protein uL11 (142 aa).

The protein belongs to the universal ribosomal protein uL11 family. Part of the ribosomal stalk of the 50S ribosomal subunit. Interacts with L10 and the large rRNA to form the base of the stalk. L10 forms an elongated spine to which L12 dimers bind in a sequential fashion forming a multimeric L10(L12)X complex. One or more lysine residues are methylated.

Its function is as follows. Forms part of the ribosomal stalk which helps the ribosome interact with GTP-bound translation factors. The polypeptide is Large ribosomal subunit protein uL11 (Xanthomonas campestris pv. campestris (strain 8004)).